The chain runs to 127 residues: Fluoride-specific ion channel FluC (127 aa).

A run of 4 helical transmembrane segments spans residues Leu4 to Met24, Leu35 to Phe55, Thr71 to Leu91, and Val103 to Ala123. Residues Gly75 and Thr78 each contribute to the Na(+) site.

This sequence belongs to the fluoride channel Fluc/FEX (TC 1.A.43) family.

The protein localises to the cell inner membrane. It carries out the reaction fluoride(in) = fluoride(out). Na(+) is not transported, but it plays an essential structural role and its presence is essential for fluoride channel function. Functionally, fluoride-specific ion channel. Important for reducing fluoride concentration in the cell, thus reducing its toxicity. This Escherichia coli (strain K12 / MC4100 / BW2952) protein is Fluoride-specific ion channel FluC.